A 491-amino-acid polypeptide reads, in one-letter code: Glycogen synthase 1 (491 aa).

Lys-15 contacts ADP-alpha-D-glucose.

It belongs to the glycosyltransferase 1 family. Bacterial/plant glycogen synthase subfamily.

It catalyses the reaction [(1-&gt;4)-alpha-D-glucosyl](n) + ADP-alpha-D-glucose = [(1-&gt;4)-alpha-D-glucosyl](n+1) + ADP + H(+). Its pathway is glycan biosynthesis; glycogen biosynthesis. Its function is as follows. Synthesizes alpha-1,4-glucan chains using ADP-glucose. This Synechococcus sp. (strain JA-3-3Ab) (Cyanobacteria bacterium Yellowstone A-Prime) protein is Glycogen synthase 1.